The sequence spans 441 residues: GTPase Der (441 aa).

EngA-type G domains lie at 4-168 (PVVA…PEDI) and 177-352 (IRIA…EQNS). GTP contacts are provided by residues 10 to 17 (GRPNVGKS), 57 to 61 (DTGGI), 121 to 124 (NKVE), 183 to 190 (GRPNVGKS), 230 to 234 (DTAGM), and 295 to 298 (NKWD). Positions 353 to 437 (TRVATATLNT…PIRMIVRQKD (85 aa)) constitute a KH-like domain.

It belongs to the TRAFAC class TrmE-Era-EngA-EngB-Septin-like GTPase superfamily. EngA (Der) GTPase family. In terms of assembly, associates with the 50S ribosomal subunit.

GTPase that plays an essential role in the late steps of ribosome biogenesis. The chain is GTPase Der from Desulfitobacterium hafniense (strain Y51).